The sequence spans 25 residues: Insulin mimetic protein (25 aa).

The segment at 1 to 25 (TKDPELKQCKKQQKKQQQYDDDDKK) is disordered.

In terms of processing, glycosylated. Expressed in seed.

The protein is Insulin mimetic protein of Cnidoscolus quercifolius.